A 261-amino-acid polypeptide reads, in one-letter code: MRNDGLRIEGLTIATLGAHPLMLVEGVGLEVRRGRILALVGASGSGKSLTCAGALDVLPAGVRRLSGRVLLDGEEQALAGLKGRHVASIMQNPRSAFNPVRTMRAHGVETLKALGRHDRRSEAVLLQALEGVGLEDPGRVLGLHAFEMSGGMLQRMMIALALLTEAPFLFADEPTTDLDLVVQARVLSLLEGVVAERGLGLLIVTHDMGVVARLADDVAVMAQGRIVESGPVGEIFHRPRHDATRALVAAHLSLYGLEGVA.

Residues 6–248 (LRIEGLTIAT…PRHDATRALV (243 aa)) form the ABC transporter domain. 41-48 (GASGSGKS) lines the ATP pocket.

The protein belongs to the ABC transporter superfamily. Nickel importer (TC 3.A.1.5.3) family. The complex is composed of two ATP-binding proteins (NikD and NikE), two transmembrane proteins (NikB and NikC) and a solute-binding protein (NikA).

The protein resides in the cell inner membrane. The catalysed reaction is Ni(2+)(out) + ATP + H2O = Ni(2+)(in) + ADP + phosphate + H(+). In terms of biological role, part of the ABC transporter complex NikABCDE involved in nickel import. Responsible for energy coupling to the transport system. The polypeptide is Nickel import ATP-binding protein NikD (Rhodospirillum rubrum (strain ATCC 11170 / ATH 1.1.1 / DSM 467 / LMG 4362 / NCIMB 8255 / S1)).